The sequence spans 102 residues: Small ribosomal subunit protein uS10m (102 aa).

The protein belongs to the universal ribosomal protein uS10 family.

The protein localises to the mitochondrion. The polypeptide is Small ribosomal subunit protein uS10m (RPS10) (Marchantia polymorpha (Common liverwort)).